Consider the following 204-residue polypeptide: Recombination protein RecR (204 aa).

The C4-type zinc finger occupies 58-75 (CTICQNITDVGTDPCAIC). Residues 83–181 (TVICVVESPV…AVTKIARGIP (99 aa)) enclose the Toprim domain.

The protein belongs to the RecR family.

In terms of biological role, may play a role in DNA repair. It seems to be involved in an RecBC-independent recombinational process of DNA repair. It may act with RecF and RecO. The polypeptide is Recombination protein RecR (Chlorobium chlorochromatii (strain CaD3)).